The chain runs to 635 residues: Threonine--tRNA ligase (635 aa).

Positions 1 to 61 (MINISFPDGS…DNDCKLRILT (61 aa)) constitute a TGS domain. Residues 242 to 533 (DHRKLGRELD…LIEEYAGRFP (292 aa)) are catalytic. Zn(2+) contacts are provided by C333, H384, and H510.

Belongs to the class-II aminoacyl-tRNA synthetase family. As to quaternary structure, homodimer. Requires Zn(2+) as cofactor.

It is found in the cytoplasm. It carries out the reaction tRNA(Thr) + L-threonine + ATP = L-threonyl-tRNA(Thr) + AMP + diphosphate + H(+). Its function is as follows. Catalyzes the attachment of threonine to tRNA(Thr) in a two-step reaction: L-threonine is first activated by ATP to form Thr-AMP and then transferred to the acceptor end of tRNA(Thr). Also edits incorrectly charged L-seryl-tRNA(Thr). The sequence is that of Threonine--tRNA ligase from Rickettsia africae (strain ESF-5).